The chain runs to 590 residues: Transcription factor GTE7 (590 aa).

Positions 125-160 are disordered; the sequence is LNNFTGEKNDLGPKKKKQKKNVSGLKRSNQFGPSDP. The 107-residue stretch at 164–270 folds into the Bromo domain; that stretch reads KLLAGMLNTC…DHFDGMFNPA (107 aa). Disordered regions lie at residues 282–400 and 476–590; these read TGSS…KDPN and RQGF…EAQC. The span at 288–298 shows a compositional bias: basic and acidic residues; it reads PEPDFKPDFKQ. The segment covering 347-369 has biased composition (pro residues); that stretch reads PSPPPPPPVIQPELPQPQPPPPQ. An NET domain is found at 394–475; it reads PKAKDPNKRL…NYKKMASKIK (82 aa). Residues 498-508 are compositionally biased toward basic and acidic residues; sequence SAEKRTRRGDA. Residues 509–521 are compositionally biased toward acidic residues; sequence GEEDVDIGEDIPI. Residues 537–562 are compositionally biased toward low complexity; that stretch reads AAAASSGSSSSGSSSSSGGSSSSSDS.

Its subcellular location is the nucleus. This is Transcription factor GTE7 (GTE7) from Arabidopsis thaliana (Mouse-ear cress).